The following is an 803-amino-acid chain: Zinc finger protein 226 (803 aa).

The KRAB domain maps to 8–78 (VTFKDVAVAF…TTATRRQGNL (71 aa)). Residues 252 to 274 (YQCNECKKPFSDLSSFDLHQQLQ) form a C2H2-type 1; degenerate zinc finger. A C2H2-type 2; degenerate zinc finger spans residues 280-302 (LTCVERGKGFCYSPVLPVHQKVH). 17 C2H2-type zinc fingers span residues 307–329 (LKCDECGKEFSQGAHLQTHQKVH), 335–357 (YKCKQCGKGFSRRSALNVHCKVH), 363–385 (YNCEECGRAFSQASHLQDHQRLH), 391–413 (FKCDACGKSFSRNSHLQSHQRVH), 419–441 (YKCEECGKGFICSSNLYIHQRVH), 447–469 (YKCEECGKGFSRPSSLQAHQGVH), 475–497 (YICTVCGKGFTLSSNLQAHQRVH), 503–525 (YKCNECGKSFRRNSHYQVHLVVH), 531–553 (YKCEICGKGFSQSSYLQIHQKAH), 559–581 (FKCEECGQGFNQSSRLQIHQLIH), 587–609 (YKCEECGKGFSRRADLKIHCRIH), 615–637 (YNCEECGKVFRQASNLLAHQRVH), 643–665 (FKCEECGKSFGRSAHLQAHQKVH), 671–693 (YKCDECGKGFKWSLNLDMHQRVH), 699–721 (YKCGECGKYFSQASSLQLHQSVH), 727–749 (YKCDVCGKVFSRSSQLQSHQRVH), and 755–777 (YKCEICGKSFSWRSNLTVHHRIH). The interval 781 to 803 (KSYKSNRGGKNIRESTQEKKSIK) is disordered. The span at 791–803 (NIRESTQEKKSIK) shows a compositional bias: basic and acidic residues.

It belongs to the krueppel C2H2-type zinc-finger protein family.

It is found in the nucleus. May be involved in transcriptional regulation. This Homo sapiens (Human) protein is Zinc finger protein 226 (ZNF226).